A 307-amino-acid polypeptide reads, in one-letter code: uncharacterized protein (307 aa).

Positions 11–68 (IRLRHLHTFVAVAQQGTLGRAAETLNLSQPALSKTLNELEQLTGARLFERGRQGAQLT) constitute an HTH lysR-type domain. The segment at residues 28–47 (LGRAAETLNLSQPALSKTLN) is a DNA-binding region (H-T-H motif).

Belongs to the LysR transcriptional regulatory family.

This is an uncharacterized protein from Escherichia coli (strain K12).